A 283-amino-acid polypeptide reads, in one-letter code: MPSIRATHWCFTLNFSGSIPEINWTADVQYSIWQHERVGHDHLQGYIQMNKHVTLKKMKELLPGAHLEMAKAPKKAIEYCQKKESAIAGPWEYGTWISSGSHKRKLMERFEDGPEEMKLEDPGLYRRCLSRVQMKKIRESCTWNFDLRPWQDELLKTIEQEPDDRTIIWVYGPHGGEGKSAFAKYLTLKEGWWYTAGGKATDMLYSYSLDPTCHVCIDIPRCTREEYINYSVIEQIKNRVIINTKYEPCTIRDDGHNVHVIVFCNFLPDVTRISEDRIKIINC.

Positions 3-96 (SIRATHWCFT…IAGPWEYGTW (94 aa)) constitute a CRESS-DNA virus Rep endonuclease domain. Positions 10–13 (CFTL) match the RCR-1 motif. A divalent metal cation is bound by residues E36 and H42. Residues 42–44 (HLQ) carry the RCR-2 motif. The Nuclear localization signal motif lies at 51–71 (KHVTLKKMKELLPGAHLEMAK). Y79 (for DNA cleavage activity) is an active-site residue. The RCR-3 signature appears at 79–82 (YCQK). Position 84 (E84) interacts with a divalent metal cation. The Nuclear localization signal signature appears at 96–102 (WISSGSH). 178-180 (GKS) lines the ATP pocket.

It belongs to the nanoviridea/circoviridae replication-associated protein family. Homooligomer (Potential). Rep binds to repeated DNA motifs (iterons). The cofactor is Mg(2+). Mn(2+) serves as cofactor.

The protein localises to the host nucleus. It carries out the reaction ATP + H2O = ADP + phosphate + H(+). In terms of biological role, initiates and terminates the replication only of its own subviral DNA molecule. The closed circular ssDNA genome is first converted to a superhelical dsDNA. Rep binds a specific hairpin at the genome origin of replication. Introduces an endonucleolytic nick within the intergenic region of the genome, thereby initiating the rolling circle replication (RCR). Following cleavage, binds covalently to the 5'-phosphate of DNA as a tyrosyl ester. The cleavage gives rise to a free 3'-OH that serves as a primer for the cellular DNA polymerase. The polymerase synthesizes the (+) strand DNA by rolling circle mechanism. After one round of replication, a Rep-catalyzed nucleotidyl transfer reaction releases a circular single-stranded virus genome, thereby terminating the replication. Displays origin-specific DNA cleavage, nucleotidyl transferase, ATPase and helicase activities. The protein is Para-Rep C7 (C7) of Faba bean necrotic yellows C7 alphasatellite (FBNYC7A).